The following is a 163-amino-acid chain: Large ribosomal subunit protein uL22c (163 aa).

The protein belongs to the universal ribosomal protein uL22 family. In terms of assembly, part of the 50S ribosomal subunit.

The protein localises to the plastid. Its subcellular location is the chloroplast. This protein binds specifically to 23S rRNA. Its function is as follows. The globular domain of the protein is located near the polypeptide exit tunnel on the outside of the subunit, while an extended beta-hairpin is found that lines the wall of the exit tunnel in the center of the 70S ribosome. This Lobularia maritima (Sweet alyssum) protein is Large ribosomal subunit protein uL22c (rpl22).